A 408-amino-acid polypeptide reads, in one-letter code: Peptidase T (408 aa).

Histidine 78 contributes to the Zn(2+) binding site. The active site involves aspartate 80. Residue aspartate 141 participates in Zn(2+) binding. Catalysis depends on glutamate 175, which acts as the Proton acceptor. The Zn(2+) site is built by glutamate 176, aspartate 198, and histidine 380.

It belongs to the peptidase M20B family. The cofactor is Zn(2+).

Its subcellular location is the cytoplasm. It catalyses the reaction Release of the N-terminal residue from a tripeptide.. Cleaves the N-terminal amino acid of tripeptides. This chain is Peptidase T, found in Clostridium botulinum (strain Kyoto / Type A2).